The chain runs to 186 residues: Lipoprotein signal peptidase (186 aa).

3 helical membrane-spanning segments follow: residues 11–31 (WIPL…KLLV), 44–64 (VLGD…FSIG), and 70–90 (VLRT…IVFS). Residues Asp128 and Asp150 contribute to the active site. A helical transmembrane segment spans residues 145-165 (AFNIADAVIMTCGLLLIISFI).

This sequence belongs to the peptidase A8 family.

The protein localises to the cell inner membrane. It carries out the reaction Release of signal peptides from bacterial membrane prolipoproteins. Hydrolyzes -Xaa-Yaa-Zaa-|-(S,diacylglyceryl)Cys-, in which Xaa is hydrophobic (preferably Leu), and Yaa (Ala or Ser) and Zaa (Gly or Ala) have small, neutral side chains.. Its pathway is protein modification; lipoprotein biosynthesis (signal peptide cleavage). This protein specifically catalyzes the removal of signal peptides from prolipoproteins. The polypeptide is Lipoprotein signal peptidase (Treponema pallidum (strain Nichols)).